A 248-amino-acid chain; its full sequence is 2,3-bisphosphoglycerate-dependent phosphoglycerate mutase (248 aa).

Residues 8–15 (RHGESEWN), 21–22 (TG), R60, 87–90 (ERHY), K98, 114–115 (RR), and 183–184 (GN) each bind substrate. H9 acts as the Tele-phosphohistidine intermediate in catalysis. E87 serves as the catalytic Proton donor/acceptor.

Belongs to the phosphoglycerate mutase family. BPG-dependent PGAM subfamily.

It carries out the reaction (2R)-2-phosphoglycerate = (2R)-3-phosphoglycerate. It participates in carbohydrate degradation; glycolysis; pyruvate from D-glyceraldehyde 3-phosphate: step 3/5. In terms of biological role, catalyzes the interconversion of 2-phosphoglycerate and 3-phosphoglycerate. The polypeptide is 2,3-bisphosphoglycerate-dependent phosphoglycerate mutase (Borreliella afzelii (strain PKo) (Borrelia afzelii)).